Here is a 322-residue protein sequence, read N- to C-terminus: Mas-related G-protein coupled receptor member X4 (322 aa).

Over Met-1–Thr-31 the chain is Extracellular. Asn-25 is a glycosylation site (N-linked (GlcNAc...) asparagine). Residues Val-32 to Leu-52 traverse the membrane as a helical segment. Residues Gly-53–Ala-60 lie on the Cytoplasmic side of the membrane. Residues Val-61–Ile-81 traverse the membrane as a helical segment. At Arg-82–Lys-96 the chain is on the extracellular side. Asn-89 is a glycosylation site (N-linked (GlcNAc...) asparagine). The chain crosses the membrane as a helical span at residues Ile-97 to Ser-117. At Thr-118 to His-137 the chain is on the cytoplasmic side. A helical membrane pass occupies residues Leu-138–Trp-158. Over Arg-159–Asp-177 the chain is Extracellular. A helical transmembrane segment spans residues Phe-178 to Leu-198. Residues Leu-199 to Ile-218 are Cytoplasmic-facing. The helical transmembrane segment at Leu-219–Ile-239 threads the bilayer. The Extracellular segment spans residues Tyr-240–Tyr-254. The chain crosses the membrane as a helical span at residues Leu-255–Val-275. Residues Gly-276–Pro-322 are Cytoplasmic-facing. The interval Pro-299 to Pro-322 is disordered.

The protein belongs to the G-protein coupled receptor 1 family. Mas subfamily. In terms of tissue distribution, uniquely localized in a subset of small dorsal root and trigeminal sensory neurons.

The protein localises to the cell membrane. Orphan receptor. Probably involved in the function of nociceptive neurons. May regulate nociceptor function and/or development, including the sensation or modulation of pain. Potently activated by enkephalins. The chain is Mas-related G-protein coupled receptor member X4 (MRGPRX4) from Homo sapiens (Human).